A 476-amino-acid chain; its full sequence is UPF0481 protein At3g47200 (476 aa).

Residues 1-24 (MADKTDIISSSSDKASPPPPSAFR) are disordered. The next 2 helical transmembrane spans lie at 133 to 153 (LMFM…IMSG) and 439 to 459 (AVLF…LSYL).

Belongs to the UPF0481 family.

The protein resides in the membrane. The polypeptide is UPF0481 protein At3g47200 (Arabidopsis thaliana (Mouse-ear cress)).